The chain runs to 370 residues: Queuine tRNA-ribosyltransferase (370 aa).

Asp-89 (proton acceptor) is an active-site residue. Substrate-binding positions include Asp-89–Phe-93, Asp-143, Gln-185, and Gly-212. An RNA binding region spans residues Gly-243 to Asp-249. Asp-262 serves as the catalytic Nucleophile. The interval Thr-267–Arg-271 is RNA binding; important for wobble base 34 recognition. Zn(2+)-binding residues include Cys-300, Cys-302, Cys-305, and His-331.

The protein belongs to the queuine tRNA-ribosyltransferase family. In terms of assembly, homodimer. Within each dimer, one monomer is responsible for RNA recognition and catalysis, while the other monomer binds to the replacement base PreQ1. Requires Zn(2+) as cofactor.

It carries out the reaction 7-aminomethyl-7-carbaguanine + guanosine(34) in tRNA = 7-aminomethyl-7-carbaguanosine(34) in tRNA + guanine. The protein operates within tRNA modification; tRNA-queuosine biosynthesis. Catalyzes the base-exchange of a guanine (G) residue with the queuine precursor 7-aminomethyl-7-deazaguanine (PreQ1) at position 34 (anticodon wobble position) in tRNAs with GU(N) anticodons (tRNA-Asp, -Asn, -His and -Tyr). Catalysis occurs through a double-displacement mechanism. The nucleophile active site attacks the C1' of nucleotide 34 to detach the guanine base from the RNA, forming a covalent enzyme-RNA intermediate. The proton acceptor active site deprotonates the incoming PreQ1, allowing a nucleophilic attack on the C1' of the ribose to form the product. After dissociation, two additional enzymatic reactions on the tRNA convert PreQ1 to queuine (Q), resulting in the hypermodified nucleoside queuosine (7-(((4,5-cis-dihydroxy-2-cyclopenten-1-yl)amino)methyl)-7-deazaguanosine). This Hydrogenovibrio crunogenus (strain DSM 25203 / XCL-2) (Thiomicrospira crunogena) protein is Queuine tRNA-ribosyltransferase.